The following is a 388-amino-acid chain: Acyl-CoA dehydrogenase fadE12 (388 aa).

It belongs to the acyl-CoA dehydrogenase family. The cofactor is FAD.

The enzyme catalyses a 2,3-saturated acyl-CoA + A = a 2,3-dehydroacyl-CoA + AH2. The protein is Acyl-CoA dehydrogenase fadE12 (fadE12) of Mycobacterium bovis (strain ATCC BAA-935 / AF2122/97).